A 128-amino-acid polypeptide reads, in one-letter code: Fluoride-specific ion channel FluC (128 aa).

The next 4 helical transmembrane spans lie at I5–A25, L35–F55, L67–V87, and F96–L116. Positions 75 and 78 each coordinate Na(+).

It belongs to the fluoride channel Fluc/FEX (TC 1.A.43) family.

The protein resides in the cell inner membrane. The enzyme catalyses fluoride(in) = fluoride(out). With respect to regulation, na(+) is not transported, but it plays an essential structural role and its presence is essential for fluoride channel function. Functionally, fluoride-specific ion channel. Important for reducing fluoride concentration in the cell, thus reducing its toxicity. In Burkholderia orbicola (strain MC0-3), this protein is Fluoride-specific ion channel FluC.